Here is a 135-residue protein sequence, read N- to C-terminus: Large ribosomal subunit protein uL16c (135 aa).

It belongs to the universal ribosomal protein uL16 family. Part of the 50S ribosomal subunit.

The protein localises to the plastid. It is found in the chloroplast. This Drimys granadensis protein is Large ribosomal subunit protein uL16c.